A 315-amino-acid chain; its full sequence is Probable cell division protein WhiA (315 aa).

The H-T-H motif DNA-binding region spans 280–313 (SLRELGKMLNPPVGKSGVNHRLRRIEKIADELKQ).

The protein belongs to the WhiA family.

Its function is as follows. Involved in cell division and chromosome segregation. The polypeptide is Probable cell division protein WhiA (Clostridium botulinum (strain ATCC 19397 / Type A)).